The following is an 86-amino-acid chain: Cell division protein ZapA (86 aa).

It belongs to the ZapA family. Type 2 subfamily. Homodimer. Interacts with FtsZ.

It localises to the cytoplasm. Activator of cell division through the inhibition of FtsZ GTPase activity, therefore promoting FtsZ assembly into bundles of protofilaments necessary for the formation of the division Z ring. It is recruited early at mid-cell but it is not essential for cell division. This Oceanobacillus iheyensis (strain DSM 14371 / CIP 107618 / JCM 11309 / KCTC 3954 / HTE831) protein is Cell division protein ZapA.